The sequence spans 190 residues: Orotate phosphoribosyltransferase (190 aa).

114-122 (EDVITTGGS) is a binding site for 5-phospho-alpha-D-ribose 1-diphosphate. 2 residues coordinate orotate: T118 and R146.

It belongs to the purine/pyrimidine phosphoribosyltransferase family. PyrE subfamily. In terms of assembly, homodimer. The cofactor is Mg(2+).

It carries out the reaction orotidine 5'-phosphate + diphosphate = orotate + 5-phospho-alpha-D-ribose 1-diphosphate. It participates in pyrimidine metabolism; UMP biosynthesis via de novo pathway; UMP from orotate: step 1/2. In terms of biological role, catalyzes the transfer of a ribosyl phosphate group from 5-phosphoribose 1-diphosphate to orotate, leading to the formation of orotidine monophosphate (OMP). The protein is Orotate phosphoribosyltransferase of Caldicellulosiruptor bescii (strain ATCC BAA-1888 / DSM 6725 / KCTC 15123 / Z-1320) (Anaerocellum thermophilum).